A 140-amino-acid polypeptide reads, in one-letter code: ATP synthase epsilon chain (140 aa).

Belongs to the ATPase epsilon chain family. As to quaternary structure, F-type ATPases have 2 components, CF(1) - the catalytic core - and CF(0) - the membrane proton channel. CF(1) has five subunits: alpha(3), beta(3), gamma(1), delta(1), epsilon(1). CF(0) has three main subunits: a, b and c.

The protein localises to the cell inner membrane. In terms of biological role, produces ATP from ADP in the presence of a proton gradient across the membrane. The protein is ATP synthase epsilon chain of Marinobacter nauticus (strain ATCC 700491 / DSM 11845 / VT8) (Marinobacter aquaeolei).